Consider the following 424-residue polypeptide: Homeobox-containing protein 1 (424 aa).

An HNF-p1 domain is found at 1 to 30; sequence MLFTIEQLELIKKLQHTGMSSDQLLKAFGE. Positions 103 to 199 constitute a POU-specific atypical domain; the sequence is SQRTPMKEIT…PNKLAAFLAD (97 aa). Residues 215–291 constitute a DNA-binding region (homeobox); it reads QRRERYVFRP…NKRKELRRRS (77 aa). The disordered stretch occupies residues 291-345; sequence SAEASAASTSSASSSASSTANHDSVSVSSMSPRDEETSSRNTTPETAISPSPAVS. A compositionally biased stretch (low complexity) spans 293-310; the sequence is EASAASTSSASSSASSTA. 2 stretches are compositionally biased toward polar residues: residues 311-321 and 329-345; these read NHDSVSVSSMS and SRNT…PAVS.

The protein belongs to the HMBOX1 homeobox family. In terms of tissue distribution, expressed in both AWC neurons. Also expressed in the FLP mechanosensory neurons.

It localises to the nucleus. Functionally, transcriptional repressor which maintains cell fate asymmetry of AWC neurons in adults by repressing the expression of multiple AWC (OFF) genes, including srsx-3 in the AWC (ON) neuron. This is Homeobox-containing protein 1 from Caenorhabditis elegans.